The primary structure comprises 1279 residues: MSSTKWTDEQRQAIFTKNCNLLVAAGAGAGKTAVLVQRIIEKILDKEEPIDIDKLLVVTFTNAAAAEMRERIGDAISKGLDEDPESKVLRKQLTLLNKSNIMTIHSFCLQVIKNNFHTIEIDPNFRICDETEGILMKQEAIDELFDELYEIENEDFINLVESYASRKDIRLQEVVLELHRFAKSAPFPYTWLLNMAEGFNVGENFNFEETLWADMIMEDMKVLLHGFKNMLQQSIDVILNSEGIDYYYEPFKMDLSFINSLLEKSSFKEFRGEIIAYDFPKLPLKRNKDADKEAKERVKKLRDRVKKRIIELRITLNSYENEFTKKEFIFLYPSMKALSNLVILFDKKYEAKKRERDLIDFNDIEHLCLSILTDKNSEGHIIPSDIALNYRKKFAEVLIDEYQDSNLVQEVIMSMVSRVKGYWSFYNGQLIFNEEEINLEEPQIGLDIPNRFMVGDVKQSIYRFRQAKPEIFLDKYNEYSEEEGTKNRKVKLFKNFRSREEVINGVNYLFKQIMSKTIGELDYTEEEALKVGASYGEEVKGEPIELCLMDKKYEISEEVLKEYNVDEEEALDNIQLEGRLVAKKIQKLVGNNLEGGLKVFDRKLGEYRNLQYRDIVILMRATSNWAPVFVEELAKEGIPVFADTNSGYFDTAEIKTMISLLQIIDNPLQDIPLLSVLRSPIASFTDDELIDIRMVNKNITFYECMEIIYRLYKNEKLDSYYSFYIEDENKINKIIKDMNEKLKNKICSFIEKLKLWREKSIHIDIDEFIWFLYVETGYYGYAGALQAGEQRQANLRILFQRAKQYAKTSYKGLFNFINFINKLKFSSGDMGSAKILGENENVVRIMSIHKSKGLEFPVVILSGTGKNFNMMDLNKNILFHRDLGYGPDYVDTERRIAYPSLVKNIIKNKIRLETLSEEMRILYVALTRAREKLIITGLINNMDKTVEDWLNLSEDKNKVPEYAVMSGKTYLDWIGPALIKHKDAVSFREELKMTSELSNIVDDKSKWKIELWNKRELLKEKVEEDEVEISEKIKETLMNLEESDYKEEIYKRLSFKYKYDNASSIPTKLSVSDVKKQFILDEKENTEELFKKLELRKPMFMEEKKKISPSERGTIIHLFMQHLDLKKAENEEDIKEQINRLIEREFITYEQSKVISSYKILKFCRGELGKRILNSNNVNKEMPFSIEIPALEIYKELDKEIYKDEKLIIQGVIDCYFEEEDGLVLLDYKTDYVNDIEEIKNRYEIQIKYYEEALNRITGKNVKDKYLYLFSVDNYIKID.

The 496-residue stretch at 4-499 (TKWTDEQRQA…VKLFKNFRSR (496 aa)) folds into the UvrD-like helicase ATP-binding domain. 25-32 (AGAGAGKT) is a binding site for ATP. Residues 526–853 (EEALKVGASY…RIMSIHKSKG (328 aa)) form the UvrD-like helicase C-terminal domain.

Belongs to the helicase family. AddA subfamily. Heterodimer of AddA and AddB/RexB. The cofactor is Mg(2+).

The enzyme catalyses Couples ATP hydrolysis with the unwinding of duplex DNA by translocating in the 3'-5' direction.. It catalyses the reaction ATP + H2O = ADP + phosphate + H(+). Its function is as follows. The heterodimer acts as both an ATP-dependent DNA helicase and an ATP-dependent, dual-direction single-stranded exonuclease. Recognizes the chi site generating a DNA molecule suitable for the initiation of homologous recombination. The AddA nuclease domain is required for chi fragment generation; this subunit has the helicase and 3' -&gt; 5' nuclease activities. The protein is ATP-dependent helicase/nuclease subunit A of Clostridium botulinum (strain Kyoto / Type A2).